Reading from the N-terminus, the 404-residue chain is Cysteine desulfurase IscS (404 aa).

Pyridoxal 5'-phosphate-binding positions include 75 to 76 (AT), N155, Q183, and 203 to 205 (SAH). An N6-(pyridoxal phosphate)lysine modification is found at K206. Residue T243 coordinates pyridoxal 5'-phosphate. C328 functions as the Cysteine persulfide intermediate in the catalytic mechanism. C328 is a [2Fe-2S] cluster binding site.

The protein belongs to the class-V pyridoxal-phosphate-dependent aminotransferase family. NifS/IscS subfamily. In terms of assembly, homodimer. Forms a heterotetramer with IscU, interacts with other sulfur acceptors. Pyridoxal 5'-phosphate serves as cofactor.

The protein resides in the cytoplasm. It catalyses the reaction (sulfur carrier)-H + L-cysteine = (sulfur carrier)-SH + L-alanine. Its pathway is cofactor biosynthesis; iron-sulfur cluster biosynthesis. In terms of biological role, master enzyme that delivers sulfur to a number of partners involved in Fe-S cluster assembly, tRNA modification or cofactor biosynthesis. Catalyzes the removal of elemental sulfur atoms from cysteine to produce alanine. Functions as a sulfur delivery protein for Fe-S cluster synthesis onto IscU, an Fe-S scaffold assembly protein, as well as other S acceptor proteins. The polypeptide is Cysteine desulfurase IscS (Proteus mirabilis (strain HI4320)).